A 328-amino-acid polypeptide reads, in one-letter code: Probable cell division protein WhiA (328 aa).

The segment at residues 276 to 309 is a DNA-binding region (H-T-H motif); sequence SLEELGRLADPQMTKDAVAGRIRRLLHMADKKAS.

It belongs to the WhiA family.

In terms of biological role, involved in cell division and chromosome segregation. In Corynebacterium diphtheriae (strain ATCC 700971 / NCTC 13129 / Biotype gravis), this protein is Probable cell division protein WhiA.